Consider the following 202-residue polypeptide: Small ribosomal subunit protein uS5 (202 aa).

Residues 46–109 form the S5 DRBM domain; it reads LKSEVLSVGF…RRAKLNIVPV (64 aa).

This sequence belongs to the universal ribosomal protein uS5 family. In terms of assembly, part of the 30S ribosomal subunit. Contacts protein S4.

Functionally, with S4 and S12 plays an important role in translational accuracy. This Thermofilum pendens (strain DSM 2475 / Hrk 5) protein is Small ribosomal subunit protein uS5.